We begin with the raw amino-acid sequence, 283 residues long: uncharacterized protein (283 aa).

The disordered stretch occupies residues 1–21 (MSAYTHPMERELSGLSSRGNS). A helical transmembrane segment spans residues 41–61 (SIFIASLVTFGVLMITLLIAL).

It belongs to the APS1/VSP family.

It is found in the membrane. This is an uncharacterized protein from Arabidopsis thaliana (Mouse-ear cress).